The following is a 25-amino-acid chain: Caerin-1.7 (25 aa).

Position 25 is a leucine amide (Leu25).

It belongs to the frog skin active peptide (FSAP) family. Caerin subfamily. Post-translationally, caerin-1.7.1 does not have any antibacterial activity. As to expression, expressed by the skin dorsal glands.

The protein localises to the secreted. Antibacterial peptide, that adopts an alpha helical conformation which can disrupt bacterial membranes. Each caerin displays a different antimicrobial specificity. The protein is Caerin-1.7 of Ranoidea xanthomera (Northern orange-eyed tree frog).